A 233-amino-acid polypeptide reads, in one-letter code: Fibrillarin-like rRNA/tRNA 2'-O-methyltransferase (233 aa).

S-adenosyl-L-methionine contacts are provided by residues 90 to 91 (TT), 109 to 110 (EF), 134 to 135 (DA), and 154 to 157 (DVAQ).

It belongs to the methyltransferase superfamily. Fibrillarin family. In terms of assembly, interacts with nop5. Component of box C/D small ribonucleoprotein (sRNP) particles that contain rpl7ae, FlpA and nop5, plus a guide RNA.

In terms of biological role, involved in pre-rRNA and tRNA processing. Utilizes the methyl donor S-adenosyl-L-methionine to catalyze the site-specific 2'-hydroxyl methylation of ribose moieties in rRNA and tRNA. Site specificity is provided by a guide RNA that base pairs with the substrate. Methylation occurs at a characteristic distance from the sequence involved in base pairing with the guide RNA. This Aeropyrum pernix (strain ATCC 700893 / DSM 11879 / JCM 9820 / NBRC 100138 / K1) protein is Fibrillarin-like rRNA/tRNA 2'-O-methyltransferase.